Reading from the N-terminus, the 542-residue chain is Formate--tetrahydrofolate ligase (542 aa).

Position 53-60 (53-60) interacts with ATP; it reads TPAGEGKT.

This sequence belongs to the formate--tetrahydrofolate ligase family.

The enzyme catalyses (6S)-5,6,7,8-tetrahydrofolate + formate + ATP = (6R)-10-formyltetrahydrofolate + ADP + phosphate. It functions in the pathway one-carbon metabolism; tetrahydrofolate interconversion. This chain is Formate--tetrahydrofolate ligase, found in Thermotoga petrophila (strain ATCC BAA-488 / DSM 13995 / JCM 10881 / RKU-1).